A 2364-amino-acid chain; its full sequence is Actin-binding protein F (2364 aa).

Positions 138-157 (THQTSPTTETTTTPSSSSSS) are enriched in low complexity. Disordered regions lie at residues 138–168 (THQTSPTTETTTTPSSSSSSSHDDKSESTLD), 1087–1111 (QASKYNESEVKDEKSMRNRQVEKRR), 1412–1435 (NNNSNNNNNTTNSNSFGDAKRAPM), and 1929–2088 (KLIS…SEFN). A compositionally biased stretch (basic and acidic residues) spans 1092–1111 (NESEVKDEKSMRNRQVEKRR). 2 stretches are compositionally biased toward low complexity: residues 1412–1428 (NNNSNNNNNTTNSNSFG) and 1932–1960 (SSSTTTDSKSTHSSVISSSSSSNLSTTTD). Positions 1960–2017 (DSSKDKKKLEKEEKQREKERKQKEKEDKKREKEELKKKEKEEKKKKEEEKKLKKKSGS) form a coiled coil. The segment covering 1961-2010 (SSKDKKKLEKEEKQREKERKQKEKEDKKREKEELKKKEKEEKKKKEEEKK) has biased composition (basic and acidic residues). Low complexity predominate over residues 2027–2047 (ATPTTTTTTEATTTTTTTTAT). Residues 2052–2070 (IKPEKIASDDEHDDHHHDE) are compositionally biased toward basic and acidic residues. Acidic residues predominate over residues 2071–2081 (HDEEDDDDEPL). A coiled-coil region spans residues 2129–2173 (VQRWNSLFKDLRNKVDQVSNKDSVEIDYEKEIDRERRQNKMASNE).

Interacts with actin.

It is found in the nucleus. It localises to the cytoplasm. The protein resides in the cytoskeleton. This chain is Actin-binding protein F (abpF), found in Dictyostelium discoideum (Social amoeba).